The primary structure comprises 373 residues: Flap endonuclease 1 (373 aa).

The interval 1-105 (MGIKGLNALI…GELEKRLKRR (105 aa)) is N-domain. A Mg(2+)-binding site is contributed by D34. Residues R47 and R71 each contribute to the DNA site. Mg(2+) is bound by residues D87, E159, E161, D180, and D182. The I-domain stretch occupies residues 123–254 (DIAKFERRTV…VTAFKLIKEH (132 aa)). DNA is bound at residue E159. Residues G232 and D234 each coordinate DNA. Mg(2+) is bound at residue D234. Residues 340–348 (TQGRLDKFF) are interaction with PCNA. The tract at residues 347–373 (FFVVKKRPAEEKKGKNTKEEKPKKKRK) is disordered.

Belongs to the XPG/RAD2 endonuclease family. FEN1 subfamily. Interacts with PCNA. Three molecules of FEN1 bind to one PCNA trimer with each molecule binding to one PCNA monomer. PCNA stimulates the nuclease activity without altering cleavage specificity. Mg(2+) is required as a cofactor. Phosphorylated. Phosphorylation upon DNA damage induces relocalization to the nuclear plasma.

The protein localises to the nucleus. Its subcellular location is the nucleolus. The protein resides in the nucleoplasm. It is found in the mitochondrion. Functionally, structure-specific nuclease with 5'-flap endonuclease and 5'-3' exonuclease activities involved in DNA replication and repair. During DNA replication, cleaves the 5'-overhanging flap structure that is generated by displacement synthesis when DNA polymerase encounters the 5'-end of a downstream Okazaki fragment. It enters the flap from the 5'-end and then tracks to cleave the flap base, leaving a nick for ligation. Also involved in the long patch base excision repair (LP-BER) pathway, by cleaving within the apurinic/apyrimidinic (AP) site-terminated flap. Acts as a genome stabilization factor that prevents flaps from equilibrating into structures that lead to duplications and deletions. Also possesses 5'-3' exonuclease activity on nicked or gapped double-stranded DNA, and exhibits RNase H activity. Also involved in replication and repair of rDNA and in repairing mitochondrial DNA. This chain is Flap endonuclease 1, found in Komagataella phaffii (strain GS115 / ATCC 20864) (Yeast).